The following is a 161-amino-acid chain: Phosphopantetheine adenylyltransferase (161 aa).

T9 is a binding site for substrate. ATP is bound by residues 9-10 (TF) and H17. Positions 41, 73, and 87 each coordinate substrate. Residues 88–90 (GLR), E98, and 123–129 (LSYISST) contribute to the ATP site.

The protein belongs to the bacterial CoaD family. In terms of assembly, homohexamer. It depends on Mg(2+) as a cofactor.

The protein localises to the cytoplasm. The enzyme catalyses (R)-4'-phosphopantetheine + ATP + H(+) = 3'-dephospho-CoA + diphosphate. Its pathway is cofactor biosynthesis; coenzyme A biosynthesis; CoA from (R)-pantothenate: step 4/5. Its function is as follows. Reversibly transfers an adenylyl group from ATP to 4'-phosphopantetheine, yielding dephospho-CoA (dPCoA) and pyrophosphate. The sequence is that of Phosphopantetheine adenylyltransferase from Hahella chejuensis (strain KCTC 2396).